We begin with the raw amino-acid sequence, 893 residues long: Protein bride of sevenless (893 aa).

Residues 1-30 (MSGLQLIWKSPTQLVLFVLLITISCIDLCH) form the signal peptide. The Extracellular portion of the chain corresponds to 32–530 (VGAATPTKKS…RIKLDTWVAT (499 aa)). Disordered regions lie at residues 36 to 66 (TPTKKSPPVRITKPQPVSSTTTAIPTTNEGS) and 82 to 102 (GTASSASSSSNGGSDDSSSTT). The segment covering 50–66 (QPVSSTTTAIPTTNEGS) has biased composition (polar residues). Residues Asn183, Asn307, Asn328, Asn471, and Asn482 are each glycosylated (N-linked (GlcNAc...) asparagine). 8 consecutive transmembrane segments (helical) span residues 531 to 551 (GLTAAILGLIATLAILVFIVV), 563 to 583 (PVTSILLLLSLILVFCSFVPF), 607 to 627 (LCGVRVFIMTLVYCFVFSLLL), 630 to 650 (AVMLASIGSEGGFLSHVNGYI), 653 to 673 (IICVLSVFVQVGMSVQLLVVM), 692 to 712 (WGLLAYDFLLLCSLVSLVPFI), 722 to 742 (GILIVIGAVLILIIWSVWIAL), and 752 to 772 (AAIPLGMQASGWAVLVGILIP). Residues 773-893 (RTFLIVRGIE…SPDHSKITRF (121 aa)) lie on the Cytoplasmic side of the membrane. Residues 858 to 893 (ANINPQRPPPHPQQSPSRSSVCSLPPSPDHSKITRF) form a disordered region.

The protein belongs to the G-protein coupled receptor 3 family.

It is found in the cell membrane. Its function is as follows. Acts as a ligand for sevenless tyrosine-kinase receptor during eye development. The protein is Protein bride of sevenless (boss) of Drosophila virilis (Fruit fly).